A 126-amino-acid chain; its full sequence is Large ribosomal subunit protein bL12 (126 aa).

Belongs to the bacterial ribosomal protein bL12 family. As to quaternary structure, homodimer. Part of the ribosomal stalk of the 50S ribosomal subunit. Forms a multimeric L10(L12)X complex, where L10 forms an elongated spine to which 2 to 4 L12 dimers bind in a sequential fashion. Binds GTP-bound translation factors.

Functionally, forms part of the ribosomal stalk which helps the ribosome interact with GTP-bound translation factors. Is thus essential for accurate translation. The chain is Large ribosomal subunit protein bL12 from Bifidobacterium longum subsp. infantis (strain ATCC 15697 / DSM 20088 / JCM 1222 / NCTC 11817 / S12).